Reading from the N-terminus, the 211-residue chain is ATP phosphoribosyltransferase (211 aa).

It belongs to the ATP phosphoribosyltransferase family. Short subfamily. In terms of assembly, heteromultimer composed of HisG and HisZ subunits.

The protein resides in the cytoplasm. The catalysed reaction is 1-(5-phospho-beta-D-ribosyl)-ATP + diphosphate = 5-phospho-alpha-D-ribose 1-diphosphate + ATP. It functions in the pathway amino-acid biosynthesis; L-histidine biosynthesis; L-histidine from 5-phospho-alpha-D-ribose 1-diphosphate: step 1/9. In terms of biological role, catalyzes the condensation of ATP and 5-phosphoribose 1-diphosphate to form N'-(5'-phosphoribosyl)-ATP (PR-ATP). Has a crucial role in the pathway because the rate of histidine biosynthesis seems to be controlled primarily by regulation of HisG enzymatic activity. The protein is ATP phosphoribosyltransferase of Bacillus thuringiensis subsp. konkukian (strain 97-27).